The chain runs to 674 residues: DNA-directed RNA polymerase subunit beta' (674 aa).

C69, C71, C87, and C90 together coordinate Zn(2+). Residues D494, D496, and D498 each contribute to the Mg(2+) site.

This sequence belongs to the RNA polymerase beta' chain family. RpoC1 subfamily. As to quaternary structure, in plastids the minimal PEP RNA polymerase catalytic core is composed of four subunits: alpha, beta, beta', and beta''. When a (nuclear-encoded) sigma factor is associated with the core the holoenzyme is formed, which can initiate transcription. Mg(2+) is required as a cofactor. The cofactor is Zn(2+).

It localises to the plastid. The protein localises to the chloroplast. It carries out the reaction RNA(n) + a ribonucleoside 5'-triphosphate = RNA(n+1) + diphosphate. Functionally, DNA-dependent RNA polymerase catalyzes the transcription of DNA into RNA using the four ribonucleoside triphosphates as substrates. This is DNA-directed RNA polymerase subunit beta' from Psilotum nudum (Whisk fern).